A 577-amino-acid polypeptide reads, in one-letter code: Arginine--tRNA ligase (577 aa).

The 'HIGH' region signature appears at Pro-122 to His-132.

This sequence belongs to the class-I aminoacyl-tRNA synthetase family. In terms of assembly, monomer.

Its subcellular location is the cytoplasm. The enzyme catalyses tRNA(Arg) + L-arginine + ATP = L-arginyl-tRNA(Arg) + AMP + diphosphate. This chain is Arginine--tRNA ligase, found in Escherichia coli O127:H6 (strain E2348/69 / EPEC).